A 216-amino-acid polypeptide reads, in one-letter code: Protein InaA (216 aa).

Belongs to the protein kinase superfamily. KdkA/RfaP family.

May be an environmental sensor responsive to several stimuli, including internal pH, proton motive force, temperature, and possibly other unknown factors. The protein is Protein InaA (inaA) of Escherichia coli (strain K12).